Consider the following 333-residue polypeptide: Phosphate acyltransferase (333 aa).

Belongs to the PlsX family. Homodimer. Probably interacts with PlsY.

It localises to the cytoplasm. It carries out the reaction a fatty acyl-[ACP] + phosphate = an acyl phosphate + holo-[ACP]. It participates in lipid metabolism; phospholipid metabolism. Catalyzes the reversible formation of acyl-phosphate (acyl-PO(4)) from acyl-[acyl-carrier-protein] (acyl-ACP). This enzyme utilizes acyl-ACP as fatty acyl donor, but not acyl-CoA. The sequence is that of Phosphate acyltransferase from Helicobacter hepaticus (strain ATCC 51449 / 3B1).